Here is a 128-residue protein sequence, read N- to C-terminus: Large ribosomal subunit protein bL12 (128 aa).

It belongs to the bacterial ribosomal protein bL12 family. Homodimer. Part of the ribosomal stalk of the 50S ribosomal subunit. Forms a multimeric L10(L12)X complex, where L10 forms an elongated spine to which 2 to 4 L12 dimers bind in a sequential fashion. Binds GTP-bound translation factors.

Its function is as follows. Forms part of the ribosomal stalk which helps the ribosome interact with GTP-bound translation factors. Is thus essential for accurate translation. The chain is Large ribosomal subunit protein bL12 from Thermosipho africanus (strain TCF52B).